The chain runs to 1078 residues: Isoleucine--tRNA ligase (1078 aa).

Positions 52–62 (PTANGKPALHH) match the 'HIGH' region motif. The short motif at 637 to 641 (KMSKS) is the 'KMSKS' region element. K640 serves as a coordination point for ATP.

Belongs to the class-I aminoacyl-tRNA synthetase family. IleS type 2 subfamily. In terms of assembly, monomer. The cofactor is Zn(2+).

It is found in the cytoplasm. It carries out the reaction tRNA(Ile) + L-isoleucine + ATP = L-isoleucyl-tRNA(Ile) + AMP + diphosphate. Its function is as follows. Catalyzes the attachment of isoleucine to tRNA(Ile). As IleRS can inadvertently accommodate and process structurally similar amino acids such as valine, to avoid such errors it has two additional distinct tRNA(Ile)-dependent editing activities. One activity is designated as 'pretransfer' editing and involves the hydrolysis of activated Val-AMP. The other activity is designated 'posttransfer' editing and involves deacylation of mischarged Val-tRNA(Ile). The polypeptide is Isoleucine--tRNA ligase (Deinococcus radiodurans (strain ATCC 13939 / DSM 20539 / JCM 16871 / CCUG 27074 / LMG 4051 / NBRC 15346 / NCIMB 9279 / VKM B-1422 / R1)).